A 213-amino-acid chain; its full sequence is MRTSSFLDRLIGEVDSALRTLVLPQKRITTRQSPAENLADTVLSAQEKKHISGLMRVNHAGEVCAQALYQGQALTARLTHIKEQMASAAAEEVDHLAWCEERLYELGSKPSLLNPIWYCGSVLLGALAGLAGDKVSLGFVAETERQVTAHLQRHLHYLPEKDKKTIAILKRMQEDEEHHAHTAMEAGAVELPYIIKQLMNAVSKLMTQSSYYI.

Fe cation is bound by residues E62, E92, H95, E144, E176, and H179.

Belongs to the COQ7 family. Fe cation is required as a cofactor.

The protein resides in the cell membrane. The enzyme catalyses a 5-methoxy-2-methyl-3-(all-trans-polyprenyl)benzene-1,4-diol + AH2 + O2 = a 3-demethylubiquinol + A + H2O. Its pathway is cofactor biosynthesis; ubiquinone biosynthesis. In terms of biological role, catalyzes the hydroxylation of 2-nonaprenyl-3-methyl-6-methoxy-1,4-benzoquinol during ubiquinone biosynthesis. This Legionella pneumophila subsp. pneumophila (strain Philadelphia 1 / ATCC 33152 / DSM 7513) protein is 3-demethoxyubiquinol 3-hydroxylase.